Here is a 122-residue protein sequence, read N- to C-terminus: Small ribosomal subunit protein uS13 (122 aa).

A disordered region spans residues 92-122; it reads HRNGLPVRGQRTHTNARTRKGKAKPIAGKKK. A compositionally biased stretch (basic residues) spans 101 to 122; the sequence is QRTHTNARTRKGKAKPIAGKKK.

This sequence belongs to the universal ribosomal protein uS13 family. Part of the 30S ribosomal subunit. Forms a loose heterodimer with protein S19. Forms two bridges to the 50S subunit in the 70S ribosome.

Its function is as follows. Located at the top of the head of the 30S subunit, it contacts several helices of the 16S rRNA. In the 70S ribosome it contacts the 23S rRNA (bridge B1a) and protein L5 of the 50S subunit (bridge B1b), connecting the 2 subunits; these bridges are implicated in subunit movement. Contacts the tRNAs in the A and P-sites. In Erythrobacter litoralis (strain HTCC2594), this protein is Small ribosomal subunit protein uS13.